The sequence spans 21 residues: C-phycocyanin alpha subunit (21 aa).

The protein belongs to the phycobiliprotein family. As to quaternary structure, heterodimer of an alpha and a beta subunit, which further assembles into trimers and the trimers into hexamers. Contains one covalently linked bilin chromophore.

Its subcellular location is the cellular thylakoid membrane. Light-harvesting photosynthetic bile pigment-protein from the phycobiliprotein complex (phycobilisome, PBS). Phycocyanin is the major phycobiliprotein in the PBS rod. This Anabaena sp. (strain L31) protein is C-phycocyanin alpha subunit.